The sequence spans 133 residues: Small ribosomal subunit protein uS8c (133 aa).

The protein belongs to the universal ribosomal protein uS8 family. Part of the 30S ribosomal subunit.

Its subcellular location is the plastid. The protein localises to the chloroplast. Functionally, one of the primary rRNA binding proteins, it binds directly to 16S rRNA central domain where it helps coordinate assembly of the platform of the 30S subunit. In Mesostigma viride (Green alga), this protein is Small ribosomal subunit protein uS8c (rps8).